The chain runs to 141 residues: Large ribosomal subunit protein uL11 (141 aa).

Belongs to the universal ribosomal protein uL11 family. In terms of assembly, part of the ribosomal stalk of the 50S ribosomal subunit. Interacts with L10 and the large rRNA to form the base of the stalk. L10 forms an elongated spine to which L12 dimers bind in a sequential fashion forming a multimeric L10(L12)X complex. In terms of processing, one or more lysine residues are methylated.

Functionally, forms part of the ribosomal stalk which helps the ribosome interact with GTP-bound translation factors. The sequence is that of Large ribosomal subunit protein uL11 from Nautilia profundicola (strain ATCC BAA-1463 / DSM 18972 / AmH).